Reading from the N-terminus, the 123-residue chain is Small ribosomal subunit protein uS12 (123 aa).

Asp89 is modified (3-methylthioaspartic acid).

It belongs to the universal ribosomal protein uS12 family. Part of the 30S ribosomal subunit. Contacts proteins S8 and S17. May interact with IF1 in the 30S initiation complex.

With S4 and S5 plays an important role in translational accuracy. In terms of biological role, interacts with and stabilizes bases of the 16S rRNA that are involved in tRNA selection in the A site and with the mRNA backbone. Located at the interface of the 30S and 50S subunits, it traverses the body of the 30S subunit contacting proteins on the other side and probably holding the rRNA structure together. The combined cluster of proteins S8, S12 and S17 appears to hold together the shoulder and platform of the 30S subunit. The polypeptide is Small ribosomal subunit protein uS12 (Syntrophotalea carbinolica (strain DSM 2380 / NBRC 103641 / GraBd1) (Pelobacter carbinolicus)).